The following is a 403-amino-acid chain: PP2A regulatory subunit TAP46 (403 aa).

Disordered stretches follow at residues 158–184 (ERRG…LDDD) and 351–403 (ANSS…TPCG). 2 stretches are compositionally biased toward acidic residues: residues 174-184 (ETEEDDVLDDD) and 366-375 (EDDEEDDDDA). Residues 376–391 (AQDKARAWDDWKDDNP) show a composition bias toward basic and acidic residues.

The protein belongs to the IGBP1/TAP42 family. Interacts with NPP4 and NPP5, two catalytic subunits (subunit C) of PP2A.

The protein resides in the cytoplasm. It is found in the nucleus. Involved in the regulation of the TOR signaling pathway. Seems to act as a regulator of PP2A catalytic activity. In Nicotiana benthamiana, this protein is PP2A regulatory subunit TAP46.